Consider the following 178-residue polypeptide: Large ribosomal subunit protein uL5 (178 aa).

The protein belongs to the universal ribosomal protein uL5 family. Part of the 50S ribosomal subunit; part of the 5S rRNA/L5/L18/L25 subcomplex. Contacts the 5S rRNA and the P site tRNA. Forms a bridge to the 30S subunit in the 70S ribosome.

Functionally, this is one of the proteins that bind and probably mediate the attachment of the 5S RNA into the large ribosomal subunit, where it forms part of the central protuberance. In the 70S ribosome it contacts protein S13 of the 30S subunit (bridge B1b), connecting the 2 subunits; this bridge is implicated in subunit movement. Contacts the P site tRNA; the 5S rRNA and some of its associated proteins might help stabilize positioning of ribosome-bound tRNAs. This is Large ribosomal subunit protein uL5 from Aliivibrio fischeri (strain ATCC 700601 / ES114) (Vibrio fischeri).